The primary structure comprises 379 residues: Cytochrome b (379 aa).

4 helical membrane-spanning segments follow: residues 33 to 53 (FGSLLGMCLVIQILTGLFLAM), 77 to 98 (WLIRYLHANGASMFFICLFIHV), 113 to 133 (WNIGIILFLTTMATAFVGYVL), and 178 to 198 (FFAFHFILPFIIAAFALVHLL). Residues His-83 and His-97 each coordinate heme b. The heme b site is built by His-182 and His-196. His-201 lines the a ubiquinone pocket. 4 consecutive transmembrane segments (helical) span residues 226–246 (TKDLLGIFLLLLVLMILALFF), 288–308 (LGGVLALILSILILAAFPLLN), 320–340 (VTQVIYWXXIANLLVLTWIGG), and 347–367 (FTMIGQIASITYFAIXIILIP).

Belongs to the cytochrome b family. The cytochrome bc1 complex contains 11 subunits: 3 respiratory subunits (MT-CYB, CYC1 and UQCRFS1), 2 core proteins (UQCRC1 and UQCRC2) and 6 low-molecular weight proteins (UQCRH/QCR6, UQCRB/QCR7, UQCRQ/QCR8, UQCR10/QCR9, UQCR11/QCR10 and a cleavage product of UQCRFS1). This cytochrome bc1 complex then forms a dimer. Requires heme b as cofactor.

It localises to the mitochondrion inner membrane. In terms of biological role, component of the ubiquinol-cytochrome c reductase complex (complex III or cytochrome b-c1 complex) that is part of the mitochondrial respiratory chain. The b-c1 complex mediates electron transfer from ubiquinol to cytochrome c. Contributes to the generation of a proton gradient across the mitochondrial membrane that is then used for ATP synthesis. This is Cytochrome b (MT-CYB) from Akodon lutescens puer (Altiplano grass mouse).